A 407-amino-acid chain; its full sequence is Large ribosomal subunit protein uL4y (407 aa).

The disordered stretch occupies residues 57–96 (PYAVSKKAGHQTSAESWGTGRAVSRIPRVPGGGTHRAGQA).

The protein belongs to the universal ribosomal protein uL4 family.

The chain is Large ribosomal subunit protein uL4y (RPL4D) from Arabidopsis thaliana (Mouse-ear cress).